The chain runs to 262 residues: Cytochrome b mRNA maturase bI2 (262 aa).

The protein belongs to the LAGLIDADG endonuclease family.

It is found in the mitochondrion. Its function is as follows. This protein is responsible for splicing and maturation of cytochrome b mRNA. Specifically, it may be responsible for the splicing specificity of the second intron. This chain is Cytochrome b mRNA maturase bI2 (bI2), found in Debaryomyces hansenii (strain ATCC 36239 / CBS 767 / BCRC 21394 / JCM 1990 / NBRC 0083 / IGC 2968) (Yeast).